Here is a 77-residue protein sequence, read N- to C-terminus: Serine protease inhibitor 1 (77 aa).

Positions 1–17 (MMFTPLIVLTLLVLATA) are cleaved as a signal peptide. Intrachain disulfides connect Cys-21-Cys-53, Cys-30-Cys-48, Cys-33-Cys-44, Cys-37-Cys-74, and Cys-55-Cys-68. The region spanning 21 to 74 (CGPNEQWSDCPGCELQCGESDKPCPAMCGDPKCYCSPDQYRRIPDGRCIRKIQC) is the TIL domain.

It localises to the secreted. In terms of biological role, defends the organism against the host's proteinases. The protein is Serine protease inhibitor 1 of Anisakis simplex (Herring worm).